We begin with the raw amino-acid sequence, 76 residues long: Small ribosomal subunit protein eS17 (76 aa).

This sequence belongs to the eukaryotic ribosomal protein eS17 family.

In Metallosphaera sedula (strain ATCC 51363 / DSM 5348 / JCM 9185 / NBRC 15509 / TH2), this protein is Small ribosomal subunit protein eS17.